Here is a 30-residue protein sequence, read N- to C-terminus: Small toxic protein BsrE (30 aa).

The helical transmembrane segment at phenylalanine 4–isoleucine 24 threads the bilayer.

The protein resides in the cell membrane. Its function is as follows. Toxic component of a type I toxin-antitoxin (TA) system; overexpression in the absence of cognate antisense antitoxin SR5 RNA leads to cell lysis. Base pairing occurs between the 3' UTRs of bsrE mRNA and SR5 RNA which leads to bsrE mRNA degradation initiated by RNase III (rnc) and RNase J1 (rnjA). Genetic evidence suggests an unidentified RNA-binding protein may exist that promotes TA RNA interaction. The polypeptide is Small toxic protein BsrE (Bacillus subtilis (strain 168)).